The primary structure comprises 85 residues: Cell division topological specificity factor (85 aa).

Belongs to the MinE family.

Functionally, prevents the cell division inhibition by proteins MinC and MinD at internal division sites while permitting inhibition at polar sites. This ensures cell division at the proper site by restricting the formation of a division septum at the midpoint of the long axis of the cell. This chain is Cell division topological specificity factor, found in Chromobacterium violaceum (strain ATCC 12472 / DSM 30191 / JCM 1249 / CCUG 213 / NBRC 12614 / NCIMB 9131 / NCTC 9757 / MK).